Reading from the N-terminus, the 300-residue chain is Energy-coupling factor transporter ATP-binding protein EcfA2 (300 aa).

Residues 3 to 258 (IKAKNIVKIY…NKFLIENKML (256 aa)) enclose the ABC transporter domain. 40 to 47 (GQTGSGKT) contacts ATP.

It belongs to the ABC transporter superfamily. Energy-coupling factor EcfA family. In terms of assembly, forms a stable energy-coupling factor (ECF) transporter complex composed of 2 membrane-embedded substrate-binding proteins (S component), 2 ATP-binding proteins (A component) and 2 transmembrane proteins (T component).

Its subcellular location is the cell membrane. Functionally, ATP-binding (A) component of a common energy-coupling factor (ECF) ABC-transporter complex. Unlike classic ABC transporters this ECF transporter provides the energy necessary to transport a number of different substrates. The sequence is that of Energy-coupling factor transporter ATP-binding protein EcfA2 from Mesomycoplasma hyopneumoniae (strain 232) (Mycoplasma hyopneumoniae).